Consider the following 303-residue polypeptide: Mitochondrial carrier homolog 2 (303 aa).

Residue Ala2 is modified to N-acetylalanine. Residues 2–15 lie on the Mitochondrial intermembrane side of the membrane; the sequence is ADAASQVLLGSGLT. Solcar repeat units lie at residues 2–98 and 118–206; these read ADAA…YQES and DRVI…INTY. The helical transmembrane segment at 16-36 threads the bilayer; the sequence is ILSQPLMYVKVLIQVGYEPLP. The Cytoplasmic segment spans residues 37–77; it reads PTIGRNIFGRQVCQLPGLFCYAQHIASIDGRRGLFTGLTPR. Residues 78–92 traverse the membrane as a helical segment; the sequence is LCSGVLGTVVHGKVL. The Mitochondrial intermembrane portion of the chain corresponds to 93–135; it reads QYYQESEKPEELGSVTVQKEYSSSFDRVIKETTREMIARSAAT. Residues 136–156 form a helical membrane-spanning segment; the sequence is LITHPFHVITLRSMVQFIGRE. Residues 157–180 are Cytoplasmic-facing; sequence SKYCGLCDSIVTIYREEGIVGFFA. Residues 181–199 traverse the membrane as a helical segment; that stretch reads GLIPRLLGDIISLWLCNSL. The Mitochondrial intermembrane portion of the chain corresponds to 200 to 231; the sequence is AYLINTYALDSGVSTMNEMKSYSQAVTGFFAS. A helical transmembrane segment spans residues 232–252; the sequence is MLTYPFVLVSNLMAVNNCGLA. Topologically, residues 253 to 280 are cytoplasmic; that stretch reads GGSPPYSPIYTSWIDCWCMLQKAGNMSR. Residues 281–303 traverse the membrane as a helical segment; that stretch reads GNSLFFRKVPCGKTYCYDLRMLI.

The protein belongs to the mitochondrial carrier (TC 2.A.29) family. As to quaternary structure, interacts with p15BID. Expressed in a wide variety of tissues. Predominant expressed in liver, kidney, heart, skeletal muscle and testis.

Its subcellular location is the mitochondrion outer membrane. Functionally, protein insertase that mediates insertion of transmembrane proteins into the mitochondrial outer membrane. Catalyzes insertion of proteins with alpha-helical transmembrane regions, such as signal-anchored, tail-anchored and multi-pass membrane proteins. Does not mediate insertion of beta-barrel transmembrane proteins. Also acts as a receptor for the truncated form of pro-apoptotic BH3-interacting domain death agonist (p15 BID) and has therefore a critical function in apoptosis. Regulates the quiescence/cycling of hematopoietic stem cells (HSCs). Acts as a regulator of mitochondrial fusion, essential for the naive-to-primed interconversion of embryonic stem cells (ESCs). Acts as a regulator of lipid homeostasis and has a regulatory role in adipocyte differentiation and biology. The sequence is that of Mitochondrial carrier homolog 2 from Mus musculus (Mouse).